Reading from the N-terminus, the 287-residue chain is uncharacterized protein (287 aa).

10 consecutive transmembrane segments (helical) span residues 4-24 (TTNGWINGFIGVLIFSGSLPA), 36-56 (FLTVCRAAIAGVLAGGLLLIF), 66-86 (LISLLVVAFGVVIGFPLLTAL), 93-113 (SAHAIVFIGLLPLATAVFGVL), 122-142 (VFWIFSAAGSLLVAGFALIQG), 148-168 (LGDAYMLASIVVCGLGYAEGA), 179-199 (VISWALVLSLPLMLPLSFFFT), 208-228 (VPALLSLAYVSLFSMLIGFVF), 237-259 (GIAAVGQLQLLQPFFGLLLASVI), and 264-286 (VGWALVAVNIAVIMCVAAARRFA). 2 EamA domains span residues 16-139 (LIFS…GFAL) and 158-284 (VVCG…AARR).

Belongs to the EamA transporter family.

It is found in the cell membrane. This is an uncharacterized protein from Bacillus subtilis (strain 168).